The chain runs to 591 residues: L-fucose isomerase (591 aa).

Residues Glu-337 and Asp-361 each act as proton acceptor in the active site. Glu-337, Asp-361, and His-528 together coordinate Mn(2+).

The protein belongs to the L-fucose isomerase family. In terms of assembly, homohexamer. It depends on Mn(2+) as a cofactor.

Its subcellular location is the cytoplasm. It catalyses the reaction L-fucose = L-fuculose. It participates in carbohydrate degradation; L-fucose degradation; L-lactaldehyde and glycerone phosphate from L-fucose: step 1/3. In terms of biological role, converts the aldose L-fucose into the corresponding ketose L-fuculose. The chain is L-fucose isomerase from Salmonella typhi.